Here is a 392-residue protein sequence, read N- to C-terminus: Tryptophan synthase beta chain (392 aa).

At lysine 86 the chain carries N6-(pyridoxal phosphate)lysine.

It belongs to the TrpB family. Tetramer of two alpha and two beta chains. Pyridoxal 5'-phosphate is required as a cofactor.

It catalyses the reaction (1S,2R)-1-C-(indol-3-yl)glycerol 3-phosphate + L-serine = D-glyceraldehyde 3-phosphate + L-tryptophan + H2O. Its pathway is amino-acid biosynthesis; L-tryptophan biosynthesis; L-tryptophan from chorismate: step 5/5. Functionally, the beta subunit is responsible for the synthesis of L-tryptophan from indole and L-serine. The polypeptide is Tryptophan synthase beta chain (Methanocorpusculum labreanum (strain ATCC 43576 / DSM 4855 / Z)).